The following is a 154-amino-acid chain: UPF0178 protein Glov_0658 (154 aa).

This sequence belongs to the UPF0178 family.

The protein is UPF0178 protein Glov_0658 of Trichlorobacter lovleyi (strain ATCC BAA-1151 / DSM 17278 / SZ) (Geobacter lovleyi).